The sequence spans 182 residues: Adenylate kinase isoenzyme 6 homolog (182 aa).

A disordered region spans residues 1–20 (MATPETRRRPNILVTGSPGT). The ATP site is built by glycine 19, glycine 21, lysine 22, serine 23, and threonine 24. The interval 39–62 (EVSKEVRENNLQGDFDEQYNCHVL) is NMPbind. An LID region spans residues 116–126 (SRGYSEFKIKE). Position 117 (arginine 117) interacts with ATP.

It belongs to the adenylate kinase family. AK6 subfamily. As to quaternary structure, monomer and homodimer. Interacts with small ribosomal subunit protein uS11. Not a structural component of 43S pre-ribosomes, but transiently interacts with them by binding to uS11.

It localises to the cytoplasm. Its subcellular location is the nucleus. It catalyses the reaction AMP + ATP = 2 ADP. It carries out the reaction ATP + H2O = ADP + phosphate + H(+). Functionally, broad-specificity nucleoside monophosphate (NMP) kinase that catalyzes the reversible transfer of the terminal phosphate group between nucleoside triphosphates and monophosphates. Also has ATPase activity. Involved in the late cytoplasmic maturation steps of the 40S ribosomal particles, specifically 18S rRNA maturation. While NMP activity is not required for ribosome maturation, ATPase activity is. Associates transiently with small ribosomal subunit protein uS11. ATP hydrolysis breaks the interaction with uS11. May temporarily remove uS11 from the ribosome to enable a conformational change of the ribosomal RNA that is needed for the final maturation step of the small ribosomal subunit. Its NMP activity may have a role in nuclear energy homeostasis. AMP and dAMP are the preferred substrates, but CMP and TMP are also good substrates. ATP and dATP are the best phosphate donors. This Caenorhabditis elegans protein is Adenylate kinase isoenzyme 6 homolog.